A 273-amino-acid chain; its full sequence is Putative pyruvate, phosphate dikinase regulatory protein (273 aa).

Residue 151-158 participates in ADP binding; the sequence is GVSRTSKT.

Belongs to the pyruvate, phosphate/water dikinase regulatory protein family. PDRP subfamily.

It catalyses the reaction N(tele)-phospho-L-histidyl/L-threonyl-[pyruvate, phosphate dikinase] + ADP = N(tele)-phospho-L-histidyl/O-phospho-L-threonyl-[pyruvate, phosphate dikinase] + AMP + H(+). The catalysed reaction is N(tele)-phospho-L-histidyl/O-phospho-L-threonyl-[pyruvate, phosphate dikinase] + phosphate + H(+) = N(tele)-phospho-L-histidyl/L-threonyl-[pyruvate, phosphate dikinase] + diphosphate. In terms of biological role, bifunctional serine/threonine kinase and phosphorylase involved in the regulation of the pyruvate, phosphate dikinase (PPDK) by catalyzing its phosphorylation/dephosphorylation. This chain is Putative pyruvate, phosphate dikinase regulatory protein, found in Desulfitobacterium hafniense (strain Y51).